The sequence spans 452 residues: Pre-mRNA-splicing factor prp46 (452 aa).

Residues 61 to 70 show a composition bias toward low complexity; it reads AAKQAQAAAA. The tract at residues 61 to 129 is disordered; the sequence is AAKQAQAAAA…SATRQQPPEW (69 aa). Polar residues predominate over residues 114-125; the sequence is SLIQRPSATRQQ. WD repeat units lie at residues 141–180, 183–222, 225–264, 267–308, 310–349, 350–388, and 399–438; these read GHLGWVRSLAVEPNNEWFASGAGDRTIKIWNLATGALRLT, GHISTVRGLAVSPRHPYLFSCGEDKMVKCWDLETNKVIRH, GHLSGVYTLALHPRLDLLVTGGRDGVARVWDMRTRSNIHV, GHTG…GVLT, HKKGIRSLATHPREFTFASASTGSIKQWKCPGGEFMQNFE, GHNAIINTLSVNEDNVLFSGGDNGSMSFWDWKTGYRYQT, and EAEAGIMTSTFDRTGLRLITGEADKTIKVWKQDDQATPET. A disordered region spans residues 432 to 452; that stretch reads DQATPETHPVTWAPTLGRQRY.

This sequence belongs to the WD repeat PRL1/PRL2 family. Associated with the spliceosome.

The protein resides in the cytoplasm. It localises to the nucleus. Its function is as follows. Involved in pre-mRNA splicing and required for cell cycle progression at G2/M. This is Pre-mRNA-splicing factor prp46 (prp46) from Emericella nidulans (strain FGSC A4 / ATCC 38163 / CBS 112.46 / NRRL 194 / M139) (Aspergillus nidulans).